A 300-amino-acid chain; its full sequence is Fatty acid hydroxylase uhd1 (300 aa).

Residues 14 to 20 (GANGFVG), R39, 63 to 64 (DL), 83 to 85 (VAS), Y156, K160, 183 to 186 (PVYI), and S199 contribute to the NADP(+) site. K160 functions as the Proton donor in the catalytic mechanism.

It belongs to the NAD(P)-dependent epimerase/dehydratase family. Dihydroflavonol-4-reductase subfamily.

It participates in secondary metabolite biosynthesis. Functionally, fatty acid hydroxylase; part of the gene cluster that mediates the biosynthesis of the glycolipid biosurfactant ustilagic acid (UA). UA is a secreted cellobiose glycolipid that is toxic for many microorganisms and confers biocontrol activity to U.maydis. UA consists of 15,16-dihydroxypalmitic or 2,15,16-trihydroxypalmitic acid, which is O-glycosidically linked to cellobiose at its terminal hydroxyl group. In addition, the cellobiose moiety is acetylated and acylated with a short-chain hydroxy fatty acid. UA biosynthesis starts with omega-hydroxylation of palmitic acid catalyzed by the cytochrome P450 monooxygenase cyp1. Terminal hydroxylation of palmitic acid precedes subterminal hydroxylation catalyzed by the cytochrome P450 monooxygenase cyp2. Sequential glucosylation of the hydroxy fatty acid is probably catalyzed by the glycosyltransferase ugt1. The cellobiose lipid is further decorated by acetylation of the proximal glucose residue and by acylation with a short-chain beta-hydroxy fatty acid at the distal glucose residue. The acyltransferase uat1 may be a good candidate for catalyzing either acetylation or acylation of the cellobiose lipid. The fatty acid synthase fas2 may be involved in synthesis of the carbon backbone of the short-chain beta-hydroxy fatty acid esterified to the cellobiose disaccharide. The secreted UA consists of a mixture of both alpha-hydroxylated and non-hydroxylated glycolipids; therefore, alpha-hydroxylation of the long-chain fatty, catalyzed by the fatty acid hydroxylase ahd1, occurs late in UA biosynthesis and may be the last step before secretion. The sequence is that of Fatty acid hydroxylase uhd1 from Mycosarcoma maydis (Corn smut fungus).